We begin with the raw amino-acid sequence, 290 residues long: NH(3)-dependent NAD(+) synthetase (290 aa).

Residue 33 to 40 (GVSGGVDS) participates in ATP binding. Mg(2+) is bound at residue aspartate 39. Arginine 154 serves as a coordination point for deamido-NAD(+). Residue threonine 174 participates in ATP binding. Glutamate 179 is a binding site for Mg(2+). Residues lysine 187 and aspartate 194 each contribute to the deamido-NAD(+) site. Residues lysine 203 and serine 225 each contribute to the ATP site.

The protein belongs to the NAD synthetase family. In terms of assembly, homodimer.

The catalysed reaction is deamido-NAD(+) + NH4(+) + ATP = AMP + diphosphate + NAD(+) + H(+). Its pathway is cofactor biosynthesis; NAD(+) biosynthesis; NAD(+) from deamido-NAD(+) (ammonia route): step 1/1. Its function is as follows. Catalyzes the ATP-dependent amidation of deamido-NAD to form NAD. Uses ammonia as a nitrogen source. In Thermotoga neapolitana (strain ATCC 49049 / DSM 4359 / NBRC 107923 / NS-E), this protein is NH(3)-dependent NAD(+) synthetase.